Reading from the N-terminus, the 689-residue chain is Pyocin-S2 (689 aa).

The Zn(2+) site is built by H656, H681, and H685.

This sequence belongs to the colicin/pyosin nuclease family. Purified pyocin S2 makes up a complex of the two (large and small) proteins. The large protein, but not the pyocin complex, shows in vitro DNase activity.

Its function is as follows. Causes breakdown of chromosomal DNA as well as complete inhibition of lipid synthesis in sensitive cells. The sequence is that of Pyocin-S2 (pys2) from Pseudomonas aeruginosa (strain ATCC 15692 / DSM 22644 / CIP 104116 / JCM 14847 / LMG 12228 / 1C / PRS 101 / PAO1).